The chain runs to 274 residues: Dermonecrotic toxin SdSicTox-betaIIB1biv (274 aa).

Residue His5 is part of the active site. The Mg(2+) site is built by Glu25 and Asp27. Catalysis depends on His41, which acts as the Nucleophile. Intrachain disulfides connect Cys45–Cys51 and Cys47–Cys190. Asp85 contacts Mg(2+).

Belongs to the arthropod phospholipase D family. Class II subfamily. It depends on Mg(2+) as a cofactor. In terms of tissue distribution, expressed by the venom gland.

The protein resides in the secreted. It carries out the reaction an N-(acyl)-sphingosylphosphocholine = an N-(acyl)-sphingosyl-1,3-cyclic phosphate + choline. The enzyme catalyses an N-(acyl)-sphingosylphosphoethanolamine = an N-(acyl)-sphingosyl-1,3-cyclic phosphate + ethanolamine. The catalysed reaction is a 1-acyl-sn-glycero-3-phosphocholine = a 1-acyl-sn-glycero-2,3-cyclic phosphate + choline. It catalyses the reaction a 1-acyl-sn-glycero-3-phosphoethanolamine = a 1-acyl-sn-glycero-2,3-cyclic phosphate + ethanolamine. In terms of biological role, dermonecrotic toxins cleave the phosphodiester linkage between the phosphate and headgroup of certain phospholipids (sphingolipid and lysolipid substrates), forming an alcohol (often choline) and a cyclic phosphate. This toxin acts on sphingomyelin (SM). It may also act on ceramide phosphoethanolamine (CPE), lysophosphatidylcholine (LPC) and lysophosphatidylethanolamine (LPE), but not on lysophosphatidylserine (LPS), and lysophosphatidylglycerol (LPG). It acts by transphosphatidylation, releasing exclusively cyclic phosphate products as second products. Induces dermonecrosis, hemolysis, increased vascular permeability, edema, inflammatory response, and platelet aggregation. The chain is Dermonecrotic toxin SdSicTox-betaIIB1biv from Sicarius cf. damarensis (strain GJB-2008) (Six-eyed sand spider).